We begin with the raw amino-acid sequence, 658 residues long: PTS system 2-O-alpha-mannosyl-D-glycerate-specific EIIABC component (658 aa).

Residues 1–313 (MVLFYRAHWR…TELKQALLSG (313 aa)) lie on the Periplasmic side of the membrane. The PTS EIIA type-2 domain maps to 25–171 (TLTHRDALCL…DELLSALDDK (147 aa)). His87 serves as the catalytic Tele-phosphohistidine intermediate; for EIIA activity. His87 is subject to Phosphohistidine; by HPr. The PTS EIIB type-2 domain maps to 186 to 282 (IVCVTACPAG…AEALIQQALT (97 aa)). Cys192 serves as the catalytic Phosphocysteine intermediate; for EIIB activity. Phosphocysteine; by EIIA is present on Cys192. A PTS EIIC type-2 domain is found at 306–641 (LKQALLSGIS…AISTAILLMW (336 aa)). A helical transmembrane segment spans residues 314–334 (ISFAVPLIVAGGTVLAVAVLL). Residues 335–358 (SQIFGLQDLFNEENSWLWMYRKLG) lie on the Cytoplasmic side of the membrane. A helical membrane pass occupies residues 359 to 379 (GGLLGILMVPVLAAYTAYSLA). The Periplasmic segment spans residues 380-389 (DKPALAPGFA). A helical transmembrane segment spans residues 390 to 410 (AGLAANMIGSGFLGAVVGGLI). Residues 411–433 (AGYLMRWVKNHLRLSSKFNGFLT) are Cytoplasmic-facing. The helical transmembrane segment at 434-454 (FYLYPVLGTLGAGSLMLFVVG) threads the bilayer. Residues 455–474 (EPVAWINNSLTAWLNGLSGS) are Periplasmic-facing. Residues 475–495 (NALLLGAILGFMCSFDLGGPV) traverse the membrane as a helical segment. Topologically, residues 496–500 (NKAAY) are cytoplasmic. A helical transmembrane segment spans residues 501–521 (AFCLGAMANGVYGPYAIFASV). Residues 522-551 (KMVSAFTVTASTMLAPRLFKEFEIETGKST) lie on the Periplasmic side of the membrane. The helical transmembrane segment at 552–572 (WLLGLAGITEGAIPMAIEDPL) threads the bilayer. A topological domain (cytoplasmic) is located at residue Arg573. The chain crosses the membrane as a helical span at residues 574–594 (VIGSFVLGSMVTGAIVGAMNI). Residues 595-620 (GLSTPGAGIFSLFLLHDNGAGGVMAA) are Periplasmic-facing. The chain crosses the membrane as a helical span at residues 621–641 (IGWFGAALVGAAISTAILLMW). Residues 642-658 (RRHAVKHGNYLTDGVMP) are Cytoplasmic-facing.

It is found in the cell inner membrane. The enzyme catalyses (2R)-2-O-(alpha-D-mannosyl)-glycerate(out) + N(pros)-phospho-L-histidyl-[protein] = (2R)-2-O-(6-phospho-alpha-D-mannosyl)-glycerate(in) + L-histidyl-[protein]. Its function is as follows. The phosphoenolpyruvate-dependent sugar phosphotransferase system (sugar PTS), a major carbohydrate active transport system, catalyzes the phosphorylation of incoming sugar substrates concomitantly with their translocation across the cell membrane. This system is involved in mannosyl-D-glycerate transport. Also involved in thermoinduction of ompC. This is PTS system 2-O-alpha-mannosyl-D-glycerate-specific EIIABC component from Escherichia coli (strain K12).